The following is a 331-amino-acid chain: Ketol-acid reductoisomerase (NADP(+)) (331 aa).

Positions 2 to 182 constitute a KARI N-terminal Rossmann domain; it reads AQLFYDSDAD…GGTRAGILET (181 aa). NADP(+) is bound by residues 25–28, Ser-51, Ser-53, and 83–86; these read YGSQ and DEFQ. His-108 is a catalytic residue. Gly-134 contacts NADP(+). Residues 183–328 form the KARI C-terminal knotted domain; sequence NFKEETETDL…KGLRAMFSWL (146 aa). Asp-191, Glu-195, Glu-227, and Glu-231 together coordinate Mg(2+). Ser-252 is a substrate binding site.

Belongs to the ketol-acid reductoisomerase family. Requires Mg(2+) as cofactor.

It carries out the reaction (2R)-2,3-dihydroxy-3-methylbutanoate + NADP(+) = (2S)-2-acetolactate + NADPH + H(+). The catalysed reaction is (2R,3R)-2,3-dihydroxy-3-methylpentanoate + NADP(+) = (S)-2-ethyl-2-hydroxy-3-oxobutanoate + NADPH + H(+). Its pathway is amino-acid biosynthesis; L-isoleucine biosynthesis; L-isoleucine from 2-oxobutanoate: step 2/4. It functions in the pathway amino-acid biosynthesis; L-valine biosynthesis; L-valine from pyruvate: step 2/4. Involved in the biosynthesis of branched-chain amino acids (BCAA). Catalyzes an alkyl-migration followed by a ketol-acid reduction of (S)-2-acetolactate (S2AL) to yield (R)-2,3-dihydroxy-isovalerate. In the isomerase reaction, S2AL is rearranged via a Mg-dependent methyl migration to produce 3-hydroxy-3-methyl-2-ketobutyrate (HMKB). In the reductase reaction, this 2-ketoacid undergoes a metal-dependent reduction by NADPH to yield (R)-2,3-dihydroxy-isovalerate. This chain is Ketol-acid reductoisomerase (NADP(+)), found in Prochlorococcus marinus (strain MIT 9313).